Reading from the N-terminus, the 291-residue chain is Cytosolic Fe-S cluster assembly factor CFD1 (291 aa).

24-31 lines the ATP pocket; the sequence is GKGGVGKS. [4Fe-4S] cluster contacts are provided by cysteine 199 and cysteine 202. The tract at residues 270-291 is disordered; it reads ENEEEAKETAEEEKSRAATNGQ. A compositionally biased stretch (basic and acidic residues) spans 276 to 285; it reads KETAEEEKSR.

The protein belongs to the Mrp/NBP35 ATP-binding proteins family. NUBP2/CFD1 subfamily. In terms of assembly, heterotetramer of 2 NBP35 and 2 CFD1 chains. [4Fe-4S] cluster is required as a cofactor.

Its subcellular location is the cytoplasm. In terms of biological role, component of the cytosolic iron-sulfur (Fe/S) protein assembly (CIA) machinery. Required for maturation of extramitochondrial Fe-S proteins. The NBP35-CFD1 heterotetramer forms a Fe-S scaffold complex, mediating the de novo assembly of an Fe-S cluster and its transfer to target apoproteins. Required for biogenesis and export of both ribosomal subunits, which may reflect a role in assembly of the Fe/S clusters in RLI1, a protein which performs rRNA processing and ribosome export. The chain is Cytosolic Fe-S cluster assembly factor CFD1 from Yarrowia lipolytica (strain CLIB 122 / E 150) (Yeast).